The primary structure comprises 460 residues: tRNA modification GTPase MnmE (460 aa).

(6S)-5-formyl-5,6,7,8-tetrahydrofolate is bound by residues R25, E87, and R126. The region spanning 221 to 381 (GLKVAIVGRP…LETAIANLVQ (161 aa)) is the TrmE-type G domain. K(+) is bound at residue N231. Residues 231 to 236 (NVGKSS), 250 to 256 (TDLPGTT), and 275 to 278 (DTAG) each bind GTP. S235 contacts Mg(2+). 3 residues coordinate K(+): T250, L252, and T255. Residue T256 coordinates Mg(2+). K460 contributes to the (6S)-5-formyl-5,6,7,8-tetrahydrofolate binding site.

It belongs to the TRAFAC class TrmE-Era-EngA-EngB-Septin-like GTPase superfamily. TrmE GTPase family. Homodimer. Heterotetramer of two MnmE and two MnmG subunits. The cofactor is K(+).

It localises to the cytoplasm. In terms of biological role, exhibits a very high intrinsic GTPase hydrolysis rate. Involved in the addition of a carboxymethylaminomethyl (cmnm) group at the wobble position (U34) of certain tRNAs, forming tRNA-cmnm(5)s(2)U34. The chain is tRNA modification GTPase MnmE from Picosynechococcus sp. (strain ATCC 27264 / PCC 7002 / PR-6) (Agmenellum quadruplicatum).